The primary structure comprises 296 residues: Inactive uridine phosphorylase B (296 aa).

This sequence belongs to the PNP/UDP phosphorylase family. As to quaternary structure, homodimer.

This chain is Inactive uridine phosphorylase B, found in Schistosoma mansoni (Blood fluke).